Consider the following 303-residue polypeptide: Putative CRISPR-associated endonuclease Cas1 2 (303 aa).

E149 contacts Mn(2+).

The protein belongs to the CRISPR-associated endonuclease Cas1 family. In terms of assembly, homodimer, forms a heterotetramer with a Cas2 homodimer. The cofactor is Mg(2+). It depends on Mn(2+) as a cofactor.

Its function is as follows. CRISPR (clustered regularly interspaced short palindromic repeat), is an adaptive immune system that provides protection against mobile genetic elements (viruses, transposable elements and conjugative plasmids). CRISPR clusters contain sequences complementary to antecedent mobile elements and target invading nucleic acids. CRISPR clusters are transcribed and processed into CRISPR RNA (crRNA). Acts as a dsDNA endonuclease. Involved in the integration of spacer DNA into the CRISPR cassette. The chain is Putative CRISPR-associated endonuclease Cas1 2 from Methanospirillum hungatei JF-1 (strain ATCC 27890 / DSM 864 / NBRC 100397 / JF-1).